The primary structure comprises 374 residues: Eukaryotic translation initiation factor 3 subunit M (374 aa).

A PCI domain is found at Glu180–His339.

This sequence belongs to the eIF-3 subunit M family. In terms of assembly, component of the eukaryotic translation initiation factor 3 (eIF-3) complex, which is composed of 13 subunits: eif3a, eif3b, eif3c, eif3d, eif3e, eif3f, eif3g, eif3h, eif3i, eif3j, eif3k, eif3l and eif3m.

Its subcellular location is the cytoplasm. Its function is as follows. Component of the eukaryotic translation initiation factor 3 (eIF-3) complex, which is involved in protein synthesis of a specialized repertoire of mRNAs and, together with other initiation factors, stimulates binding of mRNA and methionyl-tRNAi to the 40S ribosome. The eIF-3 complex specifically targets and initiates translation of a subset of mRNAs involved in cell proliferation. The chain is Eukaryotic translation initiation factor 3 subunit M (eif3m) from Xenopus laevis (African clawed frog).